We begin with the raw amino-acid sequence, 301 residues long: Tail tube protein (301 aa).

This sequence belongs to the skunalikevirus tail tube protein family. As to quaternary structure, homohexamer. Interacts with the tail terminator protein.

The protein localises to the virion. Forms the cylindrical rigid tail tube with a 4 nm wide central channel for DNA ejection. The tube is composed of 31 hexameric rings. The protein is Tail tube protein of Lactococcus phage SK1 (Lactococcus lactis bacteriophage SK1).